Reading from the N-terminus, the 429-residue chain is Methylenetetrahydrofolate--tRNA-(uracil-5-)-methyltransferase TrmFO (429 aa).

7–12 (GAGLAG) serves as a coordination point for FAD.

It belongs to the MnmG family. TrmFO subfamily. Requires FAD as cofactor.

The protein resides in the cytoplasm. The catalysed reaction is uridine(54) in tRNA + (6R)-5,10-methylene-5,6,7,8-tetrahydrofolate + NADH + H(+) = 5-methyluridine(54) in tRNA + (6S)-5,6,7,8-tetrahydrofolate + NAD(+). The enzyme catalyses uridine(54) in tRNA + (6R)-5,10-methylene-5,6,7,8-tetrahydrofolate + NADPH + H(+) = 5-methyluridine(54) in tRNA + (6S)-5,6,7,8-tetrahydrofolate + NADP(+). Functionally, catalyzes the folate-dependent formation of 5-methyl-uridine at position 54 (M-5-U54) in all tRNAs. In Thermosipho melanesiensis (strain DSM 12029 / CIP 104789 / BI429), this protein is Methylenetetrahydrofolate--tRNA-(uracil-5-)-methyltransferase TrmFO.